The primary structure comprises 518 residues: MGSIIISALLALVIGAVVGFFVRKSIAEAKIGGAKAAAEQLIEEAKREADALKKEALLEAKDEIHKLRTEAERDIRDRRSELQKQENRLMQKEENLDRKDEALNKREALLEAKEEALNERQQHIEQMESKVEALVKQQQAELERISGLTRDDARQLILERVEKELSHEIAMMIKEAETRAKEEADKRAKAILSLAIQRCAADHVAETTVSVVNLPNDEMKGRIIGREGRNIRTLETLTGIDLIIDDTPEAVILSGFDPIRRETARIALDKLVQDGRIHPARIEEMVEKARREVDEHIREVGEQTTFEVGVHGLHPDLIKILGRLKFRTSYGQNVLKHSVEVAFLAGLMAAELGEDEMLARRAGLLHDIGKAIDHEVEGSHVEIGVELATKYKEHPVVINSIASHHGDTEPTSVIAVLVAAADALSAARPGARSETLENYIRRLEKLEEIAESYEGVEKSYAIQAGREVRIMVKPDMIDDLEAHRLARDIRKRIEEELDYPGHIKVTVIRETRAVEYAK.

A helical transmembrane segment spans residues 2-22 (GSIIISALLALVIGAVVGFFV). One can recognise a KH domain in the interval 208–271 (TVSVVNLPND…ETARIALDKL (64 aa)). The region spanning 334–427 (VLKHSVEVAF…VAAADALSAA (94 aa)) is the HD domain.

Belongs to the RNase Y family.

It is found in the cell membrane. Its function is as follows. Endoribonuclease that initiates mRNA decay. The protein is Ribonuclease Y of Geobacillus kaustophilus (strain HTA426).